Consider the following 187-residue polypeptide: Capsid protein (187 aa).

The disordered stretch occupies residues 150 to 187; it reads RRGGARASRSPRRRTPSPRRRRSQSPRRRRSQSPSANC. The segment covering 158–180 has biased composition (basic residues); the sequence is RSPRRRTPSPRRRRSQSPRRRRS. Phosphoserine; by host is present on residues Ser-159, Ser-166, and Ser-174. The 1; half-length repeat unit spans residues 159–165; it reads SPRRRTP. The segment at 159-181 is 3 X 8 AA repeats of S-P-R-R-R-[PR]-S-Q; that stretch reads SPRRRTPSPRRRRSQSPRRRRSQ. Residues 162 to 179 carry the Bipartite nuclear localization signal motif; sequence RRTPSPRRRRSQSPRRRR. 2 consecutive repeat copies span residues 166–173 and 174–181. Residues 181 to 187 form an RNA binding region; the sequence is QSPSANC.

This sequence belongs to the orthohepadnavirus core antigen family. In terms of assembly, homodimerizes, then multimerizes. Interacts with cytosol exposed regions of viral L glycoprotein present in the reticulum-to-Golgi compartment. Interacts with human FLNB. Phosphorylated form interacts with host importin alpha; this interaction depends on the exposure of the NLS, which itself depends upon genome maturation and/or phosphorylation of the capsid protein. Interacts with host NUP153. In terms of processing, phosphorylated by host SRPK1, SRPK2, and maybe protein kinase C or GAPDH. Phosphorylation is critical for pregenomic RNA packaging. Protein kinase C phosphorylation is stimulated by HBx protein and may play a role in transport of the viral genome to the nucleus at the late step during the viral replication cycle.

It is found in the virion. It localises to the host cytoplasm. Functionally, self assembles to form an icosahedral capsid. Most capsids appear to be large particles with an icosahedral symmetry of T=4 and consist of 240 copies of capsid protein, though a fraction forms smaller T=3 particles consisting of 180 capsid proteins. Entering capsids are transported along microtubules to the nucleus. Phosphorylation of the capsid is thought to induce exposure of nuclear localization signal in the C-terminal portion of the capsid protein that allows binding to the nuclear pore complex via the importin (karyopherin-) alpha and beta. Capsids are imported in intact form through the nuclear pore into the nuclear basket, where it probably binds NUP153. Only capsids that contain the mature viral genome can release the viral DNA and capsid protein into the nucleoplasm. Immature capsids get stuck in the basket. Capsids encapsulate the pre-genomic RNA and the P protein. Pre-genomic RNA is reverse-transcribed into DNA while the capsid is still in the cytoplasm. The capsid can then either be directed to the nucleus, providing more genomes for transcription, or bud through the endoplasmic reticulum to provide new virions. The sequence is that of Capsid protein from Marmota monax (Woodchuck).